Here is a 504-residue protein sequence, read N- to C-terminus: MNQYVIAIDQGTTSTRAIIFDHSGAIVSSGQMEHEQIFPKAGWVEHDAAEIWNNTREVIASALSKANLTRHDIAAVGITNQRETAVVWDKTTGEPVYNAIVWQDTRTQDIVDELSKDGGGDRFKQKVGLPLATYFSGTKIKWILDNVDGAREKAEAGNLVFGNTDCWVLWNLTGGVDGGVHVTDVTNASRTLFMDLETLQWDEEILGIFGVPRSMMPEIKSSSEVYGTVHTSQLLRETPVAGILGDQQAATFGQAAFETGEAKNTYGTGCFLIFNTGEEIVHSKNGLLTTVGYKLGDAKPHYALEGSIAVTGSLIQWLRDNLGMISSAPEVETLAASVKDNGGVYIVPAFSGLFAPYWRPDARGAIVGLTRFVNKNHIARAALESTAFQTREVLDAVNADSGVPLTELKVDGGMVANDALMQFQADILGVPVIRPKVIETTALGAAYAAGLAVGFWKDLGELSSNWSEDKRWEPQLDQAEQERQMRLWRKAVTKSMDWVDEDVK.

Thr12 is an ADP binding site. ATP is bound by residues Thr12, Thr13, and Ser14. Thr12 contributes to the sn-glycerol 3-phosphate binding site. ADP is bound at residue Arg16. Positions 82, 83, 134, and 246 each coordinate sn-glycerol 3-phosphate. Glycerol contacts are provided by Arg82, Glu83, Tyr134, Asp246, and Gln247. The ADP site is built by Thr268 and Gly312. ATP contacts are provided by Thr268, Gly312, Gln316, and Gly413. Positions 413 and 417 each coordinate ADP.

Belongs to the FGGY kinase family.

The enzyme catalyses glycerol + ATP = sn-glycerol 3-phosphate + ADP + H(+). It functions in the pathway polyol metabolism; glycerol degradation via glycerol kinase pathway; sn-glycerol 3-phosphate from glycerol: step 1/1. Inhibited by fructose 1,6-bisphosphate (FBP). Functionally, key enzyme in the regulation of glycerol uptake and metabolism. Catalyzes the phosphorylation of glycerol to yield sn-glycerol 3-phosphate. The sequence is that of Glycerol kinase from Pseudarthrobacter chlorophenolicus (strain ATCC 700700 / DSM 12829 / CIP 107037 / JCM 12360 / KCTC 9906 / NCIMB 13794 / A6) (Arthrobacter chlorophenolicus).